The following is a 498-amino-acid chain: ATP synthase subunit beta, chloroplastic (498 aa).

172–179 (GGAGVGKT) contacts ATP.

This sequence belongs to the ATPase alpha/beta chains family. In terms of assembly, F-type ATPases have 2 components, CF(1) - the catalytic core - and CF(0) - the membrane proton channel. CF(1) has five subunits: alpha(3), beta(3), gamma(1), delta(1), epsilon(1). CF(0) has four main subunits: a(1), b(1), b'(1) and c(9-12).

It is found in the plastid. The protein localises to the chloroplast thylakoid membrane. It catalyses the reaction ATP + H2O + 4 H(+)(in) = ADP + phosphate + 5 H(+)(out). Functionally, produces ATP from ADP in the presence of a proton gradient across the membrane. The catalytic sites are hosted primarily by the beta subunits. The polypeptide is ATP synthase subunit beta, chloroplastic (Nicotiana rustica (Aztec tobacco)).